The chain runs to 33 residues: Putative tumor antigen NA88-A (33 aa).

As to expression, expressed in testis and melanoma cell lines.

The polypeptide is Putative tumor antigen NA88-A (VENTXP1) (Homo sapiens (Human)).